Reading from the N-terminus, the 115-residue chain is Large ribosomal subunit protein bL19 (115 aa).

The protein belongs to the bacterial ribosomal protein bL19 family.

This protein is located at the 30S-50S ribosomal subunit interface and may play a role in the structure and function of the aminoacyl-tRNA binding site. This Pectobacterium carotovorum subsp. carotovorum (strain PC1) protein is Large ribosomal subunit protein bL19.